Here is a 238-residue protein sequence, read N- to C-terminus: EKC/KEOPS complex subunit SPAP27G11.07c (238 aa).

The Protein kinase domain maps to 20–238; sequence EKKLTVVKQG…MRGRKRTMIG (219 aa). ATP contacts are provided by residues 26-34 and lysine 48; that span reads VKQGAEAIT. Aspartate 148 (proton acceptor) is an active-site residue.

Belongs to the protein kinase superfamily. BUD32 family. In terms of assembly, component of the EKC/KEOPS complex composed of at least SPAP27G11.07c/BUD32, cgi121, gon7, pgp2 and SPAC4H3.13/PCC1; the whole complex dimerizes.

It localises to the cytoplasm. Its subcellular location is the nucleus. It is found in the chromosome. The protein localises to the telomere. The enzyme catalyses L-seryl-[protein] + ATP = O-phospho-L-seryl-[protein] + ADP + H(+). It catalyses the reaction L-threonyl-[protein] + ATP = O-phospho-L-threonyl-[protein] + ADP + H(+). Functionally, component of the EKC/KEOPS complex that is required for the formation of a threonylcarbamoyl group on adenosine at position 37 (t(6)A37) in tRNAs that read codons beginning with adenine. The complex is probably involved in the transfer of the threonylcarbamoyl moiety of threonylcarbamoyl-AMP (TC-AMP) to the N6 group of A37. BUD32 has ATPase activity in the context of the EKC/KEOPS complex and likely plays a supporting role to the catalytic subunit KAE1. The EKC/KEOPS complex also promotes both telomere uncapping and telomere elongation. The complex is required for efficient recruitment of transcriptional coactivators. The chain is EKC/KEOPS complex subunit SPAP27G11.07c from Schizosaccharomyces pombe (strain 972 / ATCC 24843) (Fission yeast).